We begin with the raw amino-acid sequence, 274 residues long: Octanoyl-[GcvH]:protein N-octanoyltransferase (274 aa).

Positions 37-242 constitute a BPL/LPL catalytic domain; it reads QGNDAVVRTW…AMKTLGATLS (206 aa). The Acyl-thioester intermediate role is filled by C141.

This sequence belongs to the octanoyltransferase LipL family.

It catalyses the reaction N(6)-octanoyl-L-lysyl-[glycine-cleavage complex H protein] + L-lysyl-[lipoyl-carrier protein] = N(6)-octanoyl-L-lysyl-[lipoyl-carrier protein] + L-lysyl-[glycine-cleavage complex H protein]. Its pathway is protein modification; protein lipoylation via endogenous pathway; protein N(6)-(lipoyl)lysine from octanoyl-[acyl-carrier-protein]. Catalyzes the amidotransfer (transamidation) of the octanoyl moiety from octanoyl-GcvH to the lipoyl domain of the E2 subunit of lipoate-dependent enzymes. The protein is Octanoyl-[GcvH]:protein N-octanoyltransferase of Macrococcus caseolyticus (strain JCSC5402) (Macrococcoides caseolyticum).